A 258-amino-acid chain; its full sequence is uncharacterized protein (258 aa).

A run of 6 helical transmembrane segments spans residues 21–41, 73–93, 119–139, 153–173, 182–202, and 229–249; these read LIWLPIAMMIVGLTQPLTIYY, LSQFNTLGMALVIFSVMGSVA, WLIQSVIGIMSFAAGYGLAYY, FAASLGLYALWVIFIVTAGLA, GAAAACGIGLTAAVSFAVSLF, and FFGWSLTFSILCIMLLAVFSV.

Its subcellular location is the cell membrane. This is an uncharacterized protein from Bacillus subtilis (strain 168).